The primary structure comprises 144 residues: Globin (144 aa).

N-acetylalanine is present on Ala-1. The region spanning 1 to 144 (ALSAADAGLL…IISALQSAGK (144 aa)) is the Globin domain. Residue His-95 coordinates heme b.

This sequence belongs to the globin family. As to quaternary structure, monomer.

This is Globin from Aplysia juliana (Walking sea hare).